The chain runs to 135 residues: ATP synthase epsilon chain (135 aa).

Belongs to the ATPase epsilon chain family. In terms of assembly, F-type ATPases have 2 components, CF(1) - the catalytic core - and CF(0) - the membrane proton channel. CF(1) has five subunits: alpha(3), beta(3), gamma(1), delta(1), epsilon(1). CF(0) has three main subunits: a, b and c.

It is found in the cell inner membrane. Functionally, produces ATP from ADP in the presence of a proton gradient across the membrane. This Brucella abortus (strain S19) protein is ATP synthase epsilon chain.